The following is a 363-amino-acid chain: LIM and cysteine-rich domains protein 1 (363 aa).

Ser16 is subject to Phosphoserine. Positions 99-206 (MIMTNPIATG…GEVALPGQGG (108 aa)) constitute a PET domain. The tract at residues 200–234 (ALPGQGGLPKEEGKQQEKPEGAETAPPTTNGSIGD) is disordered. Residues 208 to 220 (PKEEGKQQEKPEG) show a composition bias toward basic and acidic residues. LIM zinc-binding domains lie at 239–304 (YVCE…SLRP) and 305–363 (RCSG…SKRS).

As to quaternary structure, interacts with beta-dystroglycan. Interacts with GATA1, GATA4 and GATA6.

It is found in the cytoplasm. Its subcellular location is the nucleus. In terms of biological role, transcriptional cofactor that restricts GATA6 function by inhibiting DNA-binding, resulting in repression of GATA6 transcriptional activation of downstream target genes. Represses GATA6-mediated trans activation of lung- and cardiac tissue-specific promoters. Inhibits DNA-binding by GATA4 and GATA1 to the cTNC promoter. Plays a critical role in the development of cardiac hypertrophy via activation of calcineurin/nuclear factor of activated T-cells signaling pathway. The polypeptide is LIM and cysteine-rich domains protein 1 (LMCD1) (Bos taurus (Bovine)).